Here is a 403-residue protein sequence, read N- to C-terminus: Acetate kinase (403 aa).

Asn7 contacts Mg(2+). Lys14 is an ATP binding site. Arg90 provides a ligand contact to substrate. Asp147 acts as the Proton donor/acceptor in catalysis. ATP-binding positions include 207-211 (HIGNG), 283-285 (DMR), and 331-335 (GVGEN). Mg(2+) is bound at residue Glu386.

It belongs to the acetokinase family. Homodimer. Mg(2+) is required as a cofactor. Mn(2+) serves as cofactor.

Its subcellular location is the cytoplasm. The catalysed reaction is acetate + ATP = acetyl phosphate + ADP. It functions in the pathway metabolic intermediate biosynthesis; acetyl-CoA biosynthesis; acetyl-CoA from acetate: step 1/2. Catalyzes the formation of acetyl phosphate from acetate and ATP. Can also catalyze the reverse reaction. This chain is Acetate kinase, found in Thermotoga sp. (strain RQ2).